The chain runs to 303 residues: Methionyl-tRNA formyltransferase (303 aa).

108 to 111 (SDLP) lines the (6S)-5,6,7,8-tetrahydrofolate pocket.

Belongs to the Fmt family.

The catalysed reaction is L-methionyl-tRNA(fMet) + (6R)-10-formyltetrahydrofolate = N-formyl-L-methionyl-tRNA(fMet) + (6S)-5,6,7,8-tetrahydrofolate + H(+). Functionally, attaches a formyl group to the free amino group of methionyl-tRNA(fMet). The formyl group appears to play a dual role in the initiator identity of N-formylmethionyl-tRNA by promoting its recognition by IF2 and preventing the misappropriation of this tRNA by the elongation apparatus. In Rickettsia felis (strain ATCC VR-1525 / URRWXCal2) (Rickettsia azadi), this protein is Methionyl-tRNA formyltransferase.